The chain runs to 755 residues: Primary amine oxidase (755 aa).

The first 30 residues, 1–30 (MANGLKFSPRKTALALAVAVVCAWQSPVFA), serve as a signal peptide directing secretion. Substrate contacts are provided by residues 411–422 (YLDSGDYGMGTL) and 493–498 (VGNYDY). The active-site Proton acceptor is the D413. Y496 (schiff-base intermediate with substrate; via topaquinone) is an active-site residue. Position 496 is a 2',4',5'-topaquinone (Y496). Cu cation-binding residues include H554 and H556. Ca(2+)-binding residues include D563, L564, D565, E603, Y697, D700, E702, and D708. D563 provides a ligand contact to Mn(2+). D565 serves as a coordination point for Mn(2+). D708 contributes to the Mn(2+) binding site. H719 lines the Cu cation pocket.

This sequence belongs to the copper/topaquinone oxidase family. Homodimer. Cu cation is required as a cofactor. The cofactor is Zn(2+). Requires Ca(2+) as cofactor. L-topaquinone serves as cofactor. It depends on Mn(2+) as a cofactor. Post-translationally, topaquinone (TPQ) is generated by copper-dependent autoxidation of a specific tyrosyl residue.

The protein resides in the periplasm. It catalyses the reaction a primary methyl amine + O2 + H2O = an aldehyde + H2O2 + NH4(+). In terms of biological role, active on tyramine, tryptamine, beta-phenethylamine and dopamine. The chain is Primary amine oxidase (maoA) from Klebsiella aerogenes (Enterobacter aerogenes).